Consider the following 661-residue polypeptide: 1-deoxy-D-xylulose-5-phosphate synthase (661 aa).

Thiamine diphosphate is bound by residues His-98 and 139-141 (AHS). Asp-170 contributes to the Mg(2+) binding site. Thiamine diphosphate contacts are provided by residues 171-172 (GA), Asn-199, Tyr-309, and Glu-391. Asn-199 contributes to the Mg(2+) binding site.

This sequence belongs to the transketolase family. DXPS subfamily. Homodimer. Mg(2+) is required as a cofactor. The cofactor is thiamine diphosphate.

The catalysed reaction is D-glyceraldehyde 3-phosphate + pyruvate + H(+) = 1-deoxy-D-xylulose 5-phosphate + CO2. The protein operates within metabolic intermediate biosynthesis; 1-deoxy-D-xylulose 5-phosphate biosynthesis; 1-deoxy-D-xylulose 5-phosphate from D-glyceraldehyde 3-phosphate and pyruvate: step 1/1. Functionally, catalyzes the acyloin condensation reaction between C atoms 2 and 3 of pyruvate and glyceraldehyde 3-phosphate to yield 1-deoxy-D-xylulose-5-phosphate (DXP). In Bradyrhizobium diazoefficiens (strain JCM 10833 / BCRC 13528 / IAM 13628 / NBRC 14792 / USDA 110), this protein is 1-deoxy-D-xylulose-5-phosphate synthase.